Here is a 308-residue protein sequence, read N- to C-terminus: Glutaminase (308 aa).

Substrate is bound by residues Ser-66, Asn-117, Glu-161, Asn-168, Tyr-192, Tyr-244, and Val-262.

It belongs to the glutaminase family. In terms of assembly, homotetramer.

The catalysed reaction is L-glutamine + H2O = L-glutamate + NH4(+). The polypeptide is Glutaminase (Proteus mirabilis (strain HI4320)).